Consider the following 225-residue polypeptide: RNA chaperone ProQ (225 aa).

Positions 103–173 are disordered; it reads LEEAKARVQT…APREERHTPV (71 aa). Low complexity predominate over residues 109–118; it reads RVQTQRAAQQ. Residues 137–146 show a composition bias toward basic residues; it reads RERKPRPQQP. Residues 147–156 show a composition bias toward basic and acidic residues; sequence RRKEGAEQRK.

Belongs to the ProQ family.

Its subcellular location is the cytoplasm. In terms of biological role, RNA chaperone with significant RNA binding, RNA strand exchange and RNA duplexing activities. May regulate ProP activity through an RNA-based, post-transcriptional mechanism. The polypeptide is RNA chaperone ProQ (Klebsiella pneumoniae (strain 342)).